The sequence spans 89 residues: MTLLASISSIGNVKSISKSNNFSSLSNSSLQSSNSIQCGGCGGGSPLIGTVGNLVGGVLVGTGIIVGTVIGTVNGVVGGLLNGPNCGCH.

The protein belongs to the hssA/B family.

The polypeptide is HssA/B-like protein 10 (hssl10) (Dictyostelium discoideum (Social amoeba)).